The sequence spans 1508 residues: uncharacterized protein (1508 aa).

Residues 149–267 adopt a coiled-coil conformation; the sequence is ARRQQWRLRR…ARSLQEHRAT (119 aa). Disordered regions lie at residues 248 to 268, 345 to 403, 536 to 575, 725 to 754, and 868 to 916; these read ERSEREREEAARSLQEHRATE, SQDW…LAGS, FLKKHPKDLKDTWNNGGGSLAGRTEEGKARGTLGRKGKNL, GLEEEDEMPHQEASGLGCRGAPEEPDSQEH, and EAKS…AEPW. Over residues 868–881 the composition is skewed to basic and acidic residues; that stretch reads EAKSKESGEGDKPG. Residues 972 to 1034 adopt a coiled-coil conformation; the sequence is ISRLERDNHR…KGNLGQLQKA (63 aa). 2 disordered regions span residues 1158-1186 and 1204-1246; these read LAAGQTGPSTGTGNSRRGADSPPPSLVWR and KEAH…EEDP. Over residues 1163–1172 the composition is skewed to polar residues; it reads TGPSTGTGNS. A compositionally biased stretch (basic and acidic residues) spans 1204 to 1215; it reads KEAHLEKEEKRP. Residues 1220 to 1230 show a composition bias toward polar residues; sequence AQGQALSSLSN. Positions 1271-1302 form a coiled coil; sequence HQASLDEATRLQEELQAKLEELQKKQHEAKLA.

This is an uncharacterized protein from Homo sapiens (Human).